Here is a 257-residue protein sequence, read N- to C-terminus: 5-keto-4-deoxy-D-glucarate aldolase (257 aa).

Residue His-51 is the Proton acceptor of the active site. Substrate is bound at residue Gln-152. Residue Glu-154 coordinates Mg(2+). Substrate is bound by residues Ser-179 and Asp-180. Residue Asp-180 coordinates Mg(2+).

The protein belongs to the HpcH/HpaI aldolase family. KDGluc aldolase subfamily. In terms of assembly, homohexamer; trimer of dimers. Mg(2+) is required as a cofactor.

The catalysed reaction is 5-dehydro-4-deoxy-D-glucarate = 2-hydroxy-3-oxopropanoate + pyruvate. It catalyses the reaction 2-dehydro-3-deoxy-D-glucarate = 2-hydroxy-3-oxopropanoate + pyruvate. The protein operates within carbohydrate acid metabolism; galactarate degradation; D-glycerate from galactarate: step 2/3. In terms of biological role, catalyzes the reversible retro-aldol cleavage of both 5-keto-4-deoxy-D-glucarate and 2-keto-3-deoxy-D-glucarate to pyruvate and tartronic semialdehyde. This is 5-keto-4-deoxy-D-glucarate aldolase from Citrobacter koseri (strain ATCC BAA-895 / CDC 4225-83 / SGSC4696).